A 102-amino-acid chain; its full sequence is Movement protein (102 aa).

A helical membrane pass occupies residues 43–63; that stretch reads VVALIVILFAVGIVYLAYTLF. A disordered region spans residues 82 to 102; that stretch reads IGFGNTPLRRPGEGNPNGGPV.

The protein belongs to the mastrevirus movement protein family. In terms of assembly, interacts with the capsid protein (CP). Part of a MP-CP-viral DNA complex.

The protein resides in the host membrane. Involved in the viral transport within, and between cells. The sequence is that of Movement protein from Tobacco yellow dwarf virus (strain Australia) (TYDV).